The primary structure comprises 283 residues: Phosphatidylglycerol--prolipoprotein diacylglyceryl transferase (283 aa).

7 helical membrane-spanning segments follow: residues 21–41 (IEVHWYGLAYACAIVIAFYMA), 62–82 (YFLWAELGIVLGARIGYILIY), 106–126 (FIGIRGMSYHGGLVGFLIASY), 136–156 (LLIYLDLIAISLPLGYVFGRI), 190–210 (PSQLIEAFLEGVIVFLMVMWA), 218–238 (GLLIVVYGLGYSLMRFIAEFY), and 252–272 (LSMGQILSLFMVIVSLGILLY). Residue R155 coordinates a 1,2-diacyl-sn-glycero-3-phospho-(1'-sn-glycerol).

It belongs to the Lgt family.

It localises to the cell inner membrane. It carries out the reaction L-cysteinyl-[prolipoprotein] + a 1,2-diacyl-sn-glycero-3-phospho-(1'-sn-glycerol) = an S-1,2-diacyl-sn-glyceryl-L-cysteinyl-[prolipoprotein] + sn-glycerol 1-phosphate + H(+). The protein operates within protein modification; lipoprotein biosynthesis (diacylglyceryl transfer). Catalyzes the transfer of the diacylglyceryl group from phosphatidylglycerol to the sulfhydryl group of the N-terminal cysteine of a prolipoprotein, the first step in the formation of mature lipoproteins. This is Phosphatidylglycerol--prolipoprotein diacylglyceryl transferase from Helicobacter acinonychis (strain Sheeba).